The primary structure comprises 214 residues: Cytochrome b (214 aa).

The next 4 membrane-spanning stretches (helical) occupy residues 31–51, 75–96, 111–131, and 176–196; these read FGSM…FLAI, WIMQ…YIHI, WLSG…GYVL, and FFAL…IHIL. Heme b is bound by residues His81 and His95. Residues His180 and His194 each contribute to the heme b site. Residue His199 participates in a ubiquinone binding.

Belongs to the cytochrome b family. In terms of assembly, the cytochrome bc1 complex contains 3 respiratory subunits (MT-CYB, CYC1 and UQCRFS1), 2 core proteins (UQCRC1 and UQCRC2) and probably 6 low-molecular weight proteins. The cofactor is heme b.

The protein resides in the mitochondrion inner membrane. Functionally, component of the ubiquinol-cytochrome c reductase complex (complex III or cytochrome b-c1 complex) that is part of the mitochondrial respiratory chain. The b-c1 complex mediates electron transfer from ubiquinol to cytochrome c. Contributes to the generation of a proton gradient across the mitochondrial membrane that is then used for ATP synthesis. The sequence is that of Cytochrome b (MT-CYB) from Bothrops atrox (Barba amarilla).